Consider the following 434-residue polypeptide: Trigger factor (434 aa).

The region spanning 163–248 is the PPIase FKBP-type domain; sequence GDTAVIDFAG…VHDIKRKELP (86 aa).

This sequence belongs to the FKBP-type PPIase family. Tig subfamily.

The protein localises to the cytoplasm. It carries out the reaction [protein]-peptidylproline (omega=180) = [protein]-peptidylproline (omega=0). Involved in protein export. Acts as a chaperone by maintaining the newly synthesized protein in an open conformation. Functions as a peptidyl-prolyl cis-trans isomerase. The chain is Trigger factor from Shouchella clausii (strain KSM-K16) (Alkalihalobacillus clausii).